Consider the following 380-residue polypeptide: Erythronate-4-phosphate dehydrogenase (380 aa).

Residues Ser-45 and Thr-66 each contribute to the substrate site. NAD(+) contacts are provided by residues Asp-146, Thr-174, 205 to 207 (ASR), and Asp-231. Arg-207 is an active-site residue. Residue Glu-236 is part of the active site. Catalysis depends on His-253, which acts as the Proton donor. Position 256 (Gly-256) interacts with NAD(+). Tyr-257 contacts substrate.

Belongs to the D-isomer specific 2-hydroxyacid dehydrogenase family. PdxB subfamily. In terms of assembly, homodimer.

It localises to the cytoplasm. It catalyses the reaction 4-phospho-D-erythronate + NAD(+) = (R)-3-hydroxy-2-oxo-4-phosphooxybutanoate + NADH + H(+). The protein operates within cofactor biosynthesis; pyridoxine 5'-phosphate biosynthesis; pyridoxine 5'-phosphate from D-erythrose 4-phosphate: step 2/5. Functionally, catalyzes the oxidation of erythronate-4-phosphate to 3-hydroxy-2-oxo-4-phosphonooxybutanoate. In Pseudomonas putida (strain ATCC 700007 / DSM 6899 / JCM 31910 / BCRC 17059 / LMG 24140 / F1), this protein is Erythronate-4-phosphate dehydrogenase.